We begin with the raw amino-acid sequence, 194 residues long: Probable transcription factor At4g00130 (194 aa).

This sequence belongs to the GeBP family.

In Arabidopsis thaliana (Mouse-ear cress), this protein is Probable transcription factor At4g00130.